Reading from the N-terminus, the 455-residue chain is Adenylosuccinate synthetase isozyme 2 (455 aa).

The disordered stretch occupies residues 1 to 25 (MSDSGDAQPQDGGNSSSSRGKSPSV). Low complexity predominate over residues 12-25 (GGNSSSSRGKSPSV). GTP contacts are provided by residues 38–44 (GDEGKGK) and 66–68 (GHT). The active-site Proton acceptor is D39. Residues D39 and G66 each contribute to the Mg(2+) site. A substrate-binding site is contributed by D39. IMP contacts are provided by residues 39-42 (DEGK), 64-67 (NAGH), T161, R175, N254, T269, and R333. Residue H67 is the Proton donor of the active site. 329-335 (VTTGRKR) contacts substrate. Residues R335, 361–363 (KLD), and 443–446 (GVGK) contribute to the GTP site.

The protein belongs to the adenylosuccinate synthetase family. In terms of assembly, homodimer. It depends on Mg(2+) as a cofactor.

It is found in the cytoplasm. The protein resides in the mitochondrion. It carries out the reaction IMP + L-aspartate + GTP = N(6)-(1,2-dicarboxyethyl)-AMP + GDP + phosphate + 2 H(+). It participates in purine metabolism; AMP biosynthesis via de novo pathway; AMP from IMP: step 1/2. Inhibited competitively by AMP and IMP and non-competitively by fructose 1,6-bisphosphate. Its function is as follows. Plays an important role in the de novo pathway and in the salvage pathway of purine nucleotide biosynthesis. Catalyzes the first committed step in the biosynthesis of AMP from IMP. In Danio rerio (Zebrafish), this protein is Adenylosuccinate synthetase isozyme 2 (adss2).